A 301-amino-acid chain; its full sequence is Mitochondrial ornithine transporter 1 (301 aa).

6 helical membrane-spanning segments follow: residues 5 to 25, 68 to 88, 110 to 130, 168 to 188, 207 to 227, and 237 to 257; these read PAIQ…ACVL, SPAL…YGFC, AAAG…TELV, GFYH…FFFF, LGPI…WLAV, and IQVL…LSIV. Solcar repeat units follow at residues 7–91, 104–197, and 207–293; these read IQAA…CQQV, LSDL…SRSF, and LGPI…SRKL.

Belongs to the mitochondrial carrier (TC 2.A.29) family. Expressed in the liver (at protein level).

Its subcellular location is the mitochondrion inner membrane. It localises to the mitochondrion membrane. It catalyses the reaction L-citrulline(in) + L-ornithine(out) + H(+)(in) = L-citrulline(out) + L-ornithine(in) + H(+)(out). The enzyme catalyses L-ornithine(in) + L-arginine(out) = L-ornithine(out) + L-arginine(in). It carries out the reaction L-ornithine(out) + L-lysine(in) = L-ornithine(in) + L-lysine(out). The catalysed reaction is L-ornithine(out) + H(+)(in) = L-ornithine(in) + H(+)(out). It catalyses the reaction L-lysine(out) + H(+)(in) = L-lysine(in) + H(+)(out). With respect to regulation, inhibited by pyridoxal 5'-phosphate as well as by mercurials (mersalyl, p-chloromercuribenzene sulfonate, and mercuric chloride), N-ethylmaleimide and spermine. Functionally, mitochondrial ornithine-citrulline antiporter. Catalyzes the exchange between cytosolic ornithine and mitochondrial citrulline plus an H(+), the proton compensates the positive charge of ornithine thus leading to an electroneutral transport. Plays a crucial role in the urea cycle, by connecting the cytosolic and the intramitochondrial reactions of the urea cycle. Lysine and arginine are also transported by the antiport mechanism. In addition, catalyzes an electroneutral exchange of ornithine or lysine for H(+), a reaction driven by the pH gradient across the inner membrane. The polypeptide is Mitochondrial ornithine transporter 1 (Slc25a15) (Rattus norvegicus (Rat)).